The following is a 192-amino-acid chain: NF-kappa-B inhibitor-interacting Ras-like protein 1 (192 aa).

11-18 (GLLSVGKT) serves as a coordination point for GTP. Positions 35–43 (DCETLEDVY) match the Effector region motif. Residues 58–93 (HLYDTRGLQKGVELPKHYFSFADGFVLVYSVNNLES) form an interactions with NFKBIA and NFKBIB region. GTP contacts are provided by residues 61–65 (DTRGL) and 120–123 (NKLD). Residues 168–192 (LSQPQSKSSFPLPGRKNKGNSNPEN) form a disordered region.

Belongs to the small GTPase superfamily. Ras family. KappaB-Ras subfamily. Interacts with both NF-kappa-B inhibitor alpha (NFKBIA) and beta (NFKBIB) in vitro. However, it probably only interacts with NFKBIB in vivo. Forms a complex with NFKBIB and NF-kappa-B heterodimer (p50/NFKB1 and p65/RELA). Also interacts with c-Rel (REL).

It is found in the cytoplasm. Atypical Ras-like protein that acts as a potent regulator of NF-kappa-B activity by preventing the degradation of NF-kappa-B inhibitor beta (NFKBIB) by most signals, explaining why NFKBIB is more resistant to degradation. May act by blocking phosphorylation of NFKBIB and mediating cytoplasmic retention of p65/RELA NF-kappa-B subunit. It is unclear whether it acts as a GTPase. Both GTP- and GDP-bound forms block phosphorylation of NFKBIB. This Mus musculus (Mouse) protein is NF-kappa-B inhibitor-interacting Ras-like protein 1 (Nkiras1).